A 131-amino-acid polypeptide reads, in one-letter code: UPF0102 protein YraN (131 aa).

The protein belongs to the UPF0102 family.

In Salmonella arizonae (strain ATCC BAA-731 / CDC346-86 / RSK2980), this protein is UPF0102 protein YraN.